A 23-amino-acid chain; its full sequence is Elongation factor Tu (23 aa).

It belongs to the GTP-binding elongation factor family. EF-Tu/EF-1A subfamily. Monomer. Post-translationally, the N-terminus is blocked. The C-terminus may be subjected to proteolysis.

It is found in the cytoplasm. Functionally, this protein promotes the GTP-dependent binding of aminoacyl-tRNA to the A-site of ribosomes during protein biosynthesis. This is Elongation factor Tu (tuf) from Delftia acidovorans (Pseudomonas acidovorans).